We begin with the raw amino-acid sequence, 112 residues long: Thyroid transcription factor 1 (112 aa).

Residues 1–60 (RRNRRVLFSQAQVYELERRFKQQKYLSAPEREHLASMIHLTPTQVKIWFQNHRYKMKRQA) constitute a DNA-binding region (homeobox). Residues 59–100 (QAKDKAAQQQLQQDSGGGGGGGGAGCPQQQQAQQQSPRRVAV) form a disordered region. Over residues 73–83 (SGGGGGGGGAG) the composition is skewed to gly residues. Positions 84–93 (CPQQQQAQQQ) are enriched in low complexity.

It belongs to the NK-2 homeobox family. Post-translationally, phosphorylated on serine residues.

Its subcellular location is the nucleus. In terms of biological role, transcription factor that binds and activates the promoter of thyroid specific genes such as thyroglobulin, thyroperoxidase, and thyrotropin receptor. Crucial in the maintenance of the thyroid differentiation phenotype. May play a role in lung development and surfactant homeostasis. This Cavia porcellus (Guinea pig) protein is Thyroid transcription factor 1 (TITF1).